The sequence spans 1116 residues: DNA-directed RNA polymerase subunit beta (1116 aa).

Residues 1070 to 1100 are compositionally biased toward basic and acidic residues; it reads KIREEEKEREKEREAREMEDPEKIVSKIDAK. Residues 1070-1116 form a disordered region; it reads KIREEEKEREKEREAREMEDPEKIVSKIDAKQKKKYKKTKKQTEKKK. A compositionally biased stretch (basic residues) spans 1101 to 1116; it reads QKKKYKKTKKQTEKKK.

Belongs to the RNA polymerase beta chain family. As to quaternary structure, in plastids the minimal PEP RNA polymerase catalytic core is composed of four subunits: alpha, beta, beta', and beta''. When a (nuclear-encoded) sigma factor is associated with the core the holoenzyme is formed, which can initiate transcription.

The protein resides in the plastid. It localises to the chloroplast. It catalyses the reaction RNA(n) + a ribonucleoside 5'-triphosphate = RNA(n+1) + diphosphate. DNA-dependent RNA polymerase catalyzes the transcription of DNA into RNA using the four ribonucleoside triphosphates as substrates. The polypeptide is DNA-directed RNA polymerase subunit beta (Heterosigma akashiwo (Chromophytic alga)).